The primary structure comprises 126 residues: CD59 glycoprotein (126 aa).

An N-terminal signal peptide occupies residues 1-25; sequence MGIQGGSVLFGLLLALAVFCHSGHS. In terms of domain architecture, UPAR/Ly6 spans 26-106; it reads LQCYNCPNPT…QLENGGTSLS (81 aa). 5 disulfides stabilise this stretch: C28-C51, C31-C38, C44-C64, C70-C88, and C89-C94. A glycan (N-linked (GlcNAc...) asparagine) is linked at N43. The GPI-anchor amidated asparagine moiety is linked to residue N100. Residues 101-126 constitute a propeptide, removed in mature form; that stretch reads GGTSLSEKTVLLLVTPLLAAAWCLHP.

Interacts with T-cell surface antigen CD2. Post-translationally, N- and O-glycosylated.

It localises to the cell membrane. Its subcellular location is the secreted. Potent inhibitor of the complement membrane attack complex (MAC) action, which protects self-cells from damage during complement activation. Acts by binding to the beta-haipins of C8 (C8A and C8B) components of the assembling MAC, forming an intermolecular beta-sheet that prevents incorporation of the multiple copies of C9 required for complete formation of the osmolytic pore. This chain is CD59 glycoprotein, found in Papio sp. (Baboon).